Consider the following 845-residue polypeptide: Envelope glycoprotein gp160 (845 aa).

A signal peptide spans 1 to 28 (METQRNYPSLWRWGTLILGMLLICSAAQ). Residues 29-673 (NLWVTVYYGV…ISHWLWYIKI (645 aa)) are Extracellular-facing. Cys-50 and Cys-70 form a disulfide bridge. N-linked (GlcNAc...) asparagine; by host glycosylation is found at Asn-84, Asn-126, Asn-132, Asn-133, Asn-136, Asn-149, Asn-153, Asn-179, Asn-180, Asn-190, Asn-223, Asn-227, Asn-234, Asn-255, Asn-269, Asn-286, Asn-294, Asn-324, Asn-331, and Asn-347. Intrachain disulfides connect Cys-115-Cys-198, Cys-122-Cys-189, Cys-127-Cys-150, Cys-211-Cys-240, and Cys-221-Cys-232. Positions 127–149 (CTNVRNNTSNSTSSMEAGGELTN) are V1. The tract at residues 150–189 (CSFNVTTVLRDKQQKVHALFYRLDVVPIDNNSTQYRLINC) is V2. The interval 289–322 (CTRPNNNTRTSIHLGPGRAFYATGDIIGDIRQAH) is V3. Cysteines 289 and 323 form a disulfide. The CD4-binding loop stretch occupies residues 355 to 365 (NSGGDMEVRTH). Cystine bridges form between Cys-369/Cys-434 and Cys-376/Cys-407. Residues 376–407 (CNTSGLFNSSWEMHTNYTSNDTKGNENITLPC) are V4. 8 N-linked (GlcNAc...) asparagine; by host glycosylation sites follow: Asn-377, Asn-383, Asn-391, Asn-395, Asn-402, Asn-437, Asn-449, and Asn-454. 2 V5 regions span residues 450-460 (ASAENYTFRPG) and 452-460 (AENYTFRPG). The fusion peptide stretch occupies residues 501 to 521 (AVGMGASFLGFLGAAGSTMGA). Residues 563-581 (KQLQARVLAVERYLRDQQL) form an immunosuppression region. A disulfide bond links Cys-587 and Cys-593. Residues Asn-600, Asn-605, Asn-614, and Asn-626 are each glycosylated (N-linked (GlcNAc...) asparagine; by host). Positions 622 to 656 (KQISNYTEEIYRLLEVSQTQQEKNEQDLLALDKWA) form a coiled coil. Positions 651–672 (ALDKWASLWTWFDISHWLWYIK) are MPER; binding to GalCer. Residues 674–694 (FIMIVGGLIGLRIIFAVLSIV) form a helical membrane-spanning segment. Residues 695 to 845 (NRVRQGYSPL…IRQGFERSLL (151 aa)) lie on the Cytoplasmic side of the membrane. The YXXL motif; contains endocytosis signal signature appears at 701–704 (YSPL). The tract at residues 708–731 (TLVPNPRGPDRPEGTEEGGGEQDR) is disordered. Positions 844–845 (LL) match the Di-leucine internalization motif motif.

This sequence belongs to the HIV-1 env protein family. In terms of assembly, the mature envelope protein (Env) consists of a homotrimer of non-covalently associated gp120-gp41 heterodimers. The resulting complex protrudes from the virus surface as a spike. There seems to be as few as 10 spikes on the average virion. Interacts with host CD4, CCR5 and CXCR4. Gp120 also interacts with the C-type lectins CD209/DC-SIGN and CLEC4M/DC-SIGNR (collectively referred to as DC-SIGN(R)). Gp120 and gp41 interact with GalCer. Gp120 interacts with host ITGA4/ITGB7 complex; on CD4+ T-cells, this interaction results in rapid activation of integrin ITGAL/LFA-1, which facilitates efficient cell-to-cell spreading of HIV-1. Gp120 interacts with cell-associated heparan sulfate; this interaction increases virus infectivity on permissive cells and may be involved in infection of CD4- cells. The mature envelope protein (Env) consists of a homotrimer of non-covalently associated gp120-gp41 heterodimers. The resulting complex protrudes from the virus surface as a spike. There seems to be as few as 10 spikes on the average virion. Post-translationally, highly glycosylated by host. The high number of glycan on the protein is reffered to as 'glycan shield' because it contributes to hide protein sequence from adaptive immune system. In terms of processing, palmitoylation of the transmembrane protein and of Env polyprotein (prior to its proteolytic cleavage) is essential for their association with host cell membrane lipid rafts. Palmitoylation is therefore required for envelope trafficking to classical lipid rafts, but not for viral replication. Specific enzymatic cleavages in vivo yield mature proteins. Envelope glycoproteins are synthesized as an inactive precursor that is heavily N-glycosylated and processed likely by host cell furin in the Golgi to yield the mature SU and TM proteins. The cleavage site between SU and TM requires the minimal sequence [KR]-X-[KR]-R. About 2 of the 9 disulfide bonds of gp41 are reduced by P4HB/PDI, following binding to CD4 receptor.

It localises to the virion membrane. Its subcellular location is the host cell membrane. The protein resides in the host endosome membrane. Its function is as follows. Oligomerizes in the host endoplasmic reticulum into predominantly trimers. In a second time, gp160 transits in the host Golgi, where glycosylation is completed. The precursor is then proteolytically cleaved in the trans-Golgi and thereby activated by cellular furin or furin-like proteases to produce gp120 and gp41. Attaches the virus to the host lymphoid cell by binding to the primary receptor CD4. This interaction induces a structural rearrangement creating a high affinity binding site for a chemokine coreceptor like CXCR4 and/or CCR5. Acts as a ligand for CD209/DC-SIGN and CLEC4M/DC-SIGNR, which are respectively found on dendritic cells (DCs), and on endothelial cells of liver sinusoids and lymph node sinuses. These interactions allow capture of viral particles at mucosal surfaces by these cells and subsequent transmission to permissive cells. HIV subverts the migration properties of dendritic cells to gain access to CD4+ T-cells in lymph nodes. Virus transmission to permissive T-cells occurs either in trans (without DCs infection, through viral capture and transmission), or in cis (following DCs productive infection, through the usual CD4-gp120 interaction), thereby inducing a robust infection. In trans infection, bound virions remain infectious over days and it is proposed that they are not degraded, but protected in non-lysosomal acidic organelles within the DCs close to the cell membrane thus contributing to the viral infectious potential during DCs' migration from the periphery to the lymphoid tissues. On arrival at lymphoid tissues, intact virions recycle back to DCs' cell surface allowing virus transmission to CD4+ T-cells. Functionally, acts as a class I viral fusion protein. Under the current model, the protein has at least 3 conformational states: pre-fusion native state, pre-hairpin intermediate state, and post-fusion hairpin state. During fusion of viral and target intracellular membranes, the coiled coil regions (heptad repeats) assume a trimer-of-hairpins structure, positioning the fusion peptide in close proximity to the C-terminal region of the ectodomain. The formation of this structure appears to drive apposition and subsequent fusion of viral and target cell membranes. Complete fusion occurs in host cell endosomes and is dynamin-dependent, however some lipid transfer might occur at the plasma membrane. The virus undergoes clathrin-dependent internalization long before endosomal fusion, thus minimizing the surface exposure of conserved viral epitopes during fusion and reducing the efficacy of inhibitors targeting these epitopes. Membranes fusion leads to delivery of the nucleocapsid into the cytoplasm. This is Envelope glycoprotein gp160 from Homo sapiens (Human).